Here is a 421-residue protein sequence, read N- to C-terminus: UPF0229 protein lpp2857 (421 aa).

The segment at 83–110 is disordered; it reads IAGDRIKRPSGGGAGGAGGNASDSGEGE. Over residues 92–101 the composition is skewed to gly residues; it reads SGGGAGGAGG.

This sequence belongs to the UPF0229 family.

This is UPF0229 protein lpp2857 from Legionella pneumophila (strain Paris).